We begin with the raw amino-acid sequence, 218 residues long: Cell division protein SepF (218 aa).

Residues 25 to 115 (DVAASTDNVI…IANRREQYQQ (91 aa)) form a disordered region. Residues 29–43 (STDNVIPRSQQSVRA) are compositionally biased toward polar residues. The segment covering 47–63 (PKQEPRNNHVQQDHQAR) has biased composition (basic and acidic residues).

The protein belongs to the SepF family. In terms of assembly, homodimer. Interacts with FtsZ.

The protein localises to the cytoplasm. In terms of biological role, cell division protein that is part of the divisome complex and is recruited early to the Z-ring. Probably stimulates Z-ring formation, perhaps through the cross-linking of FtsZ protofilaments. Its function overlaps with FtsA. The protein is Cell division protein SepF of Streptococcus pyogenes serotype M12 (strain MGAS2096).